An 824-amino-acid polypeptide reads, in one-letter code: Leucine--tRNA ligase (824 aa).

Residues proline 42–histidine 52 carry the 'HIGH' region motif. The 'KMSKS' region signature appears at lysine 581–serine 585. An ATP-binding site is contributed by lysine 584.

This sequence belongs to the class-I aminoacyl-tRNA synthetase family.

Its subcellular location is the cytoplasm. The catalysed reaction is tRNA(Leu) + L-leucine + ATP = L-leucyl-tRNA(Leu) + AMP + diphosphate. This Geotalea uraniireducens (strain Rf4) (Geobacter uraniireducens) protein is Leucine--tRNA ligase.